The following is a 252-amino-acid chain: Ribosomal RNA small subunit methyltransferase A (252 aa).

S-adenosyl-L-methionine is bound by residues asparagine 11, leucine 13, glycine 38, glutamate 60, aspartate 82, and asparagine 99.

The protein belongs to the class I-like SAM-binding methyltransferase superfamily. rRNA adenine N(6)-methyltransferase family. RsmA subfamily.

It is found in the cytoplasm. The enzyme catalyses adenosine(1518)/adenosine(1519) in 16S rRNA + 4 S-adenosyl-L-methionine = N(6)-dimethyladenosine(1518)/N(6)-dimethyladenosine(1519) in 16S rRNA + 4 S-adenosyl-L-homocysteine + 4 H(+). Functionally, specifically dimethylates two adjacent adenosines (A1518 and A1519) in the loop of a conserved hairpin near the 3'-end of 16S rRNA in the 30S particle. May play a critical role in biogenesis of 30S subunits. This Hydrogenobaculum sp. (strain Y04AAS1) protein is Ribosomal RNA small subunit methyltransferase A.